We begin with the raw amino-acid sequence, 363 residues long: NADH-quinone oxidoreductase subunit H (363 aa).

The next 10 membrane-spanning stretches (helical) occupy residues 29-49 (VLKILMIAIPLIVSVAFYVVW), 62-82 (GPMYVGMGLFQAFADVFKLLF), 94-114 (VIFVIAPLLTLAPSFAAWAVV), 127-147 (VGLLYLLAMTSLGVYGIILAG), 166-186 (VVSYEIAMGFALVGVMIAAGS), 202-222 (FFDWFLIPLFPLFIVYWVSGV), 239-257 (IVAGHMVEYSGSVFALFFL), 264-286 (ILVSFLISIFFLGGWLSPIQGWV), 293-313 (LIDWVWNGGWPWLLLKVLFFA), and 339-359 (FIPLTIVWIAVTALMVFSGVI).

This sequence belongs to the complex I subunit 1 family. As to quaternary structure, NDH-1 is composed of 14 different subunits. Subunits NuoA, H, J, K, L, M, N constitute the membrane sector of the complex.

The protein localises to the cell inner membrane. It carries out the reaction a quinone + NADH + 5 H(+)(in) = a quinol + NAD(+) + 4 H(+)(out). NDH-1 shuttles electrons from NADH, via FMN and iron-sulfur (Fe-S) centers, to quinones in the respiratory chain. The immediate electron acceptor for the enzyme in this species is believed to be ubiquinone. Couples the redox reaction to proton translocation (for every two electrons transferred, four hydrogen ions are translocated across the cytoplasmic membrane), and thus conserves the redox energy in a proton gradient. This subunit may bind ubiquinone. In Xylella fastidiosa (strain M12), this protein is NADH-quinone oxidoreductase subunit H.